The sequence spans 509 residues: Ethanolamine-phosphate phospho-lyase (509 aa).

Lysine 279 carries the post-translational modification N6-(pyridoxal phosphate)lysine. Positions 451-474 (EKTSAKRKVHNENSGDTNAKEKET) are enriched in basic and acidic residues. Residues 451 to 509 (EKTSAKRKVHNENSGDTNAKEKETCSSNSQERNPNDHAYRQSNGLHPESPTFTRKRIRT) are disordered.

This sequence belongs to the class-III pyridoxal-phosphate-dependent aminotransferase family. Homotetramer. The cofactor is pyridoxal 5'-phosphate.

Its subcellular location is the mitochondrion. It carries out the reaction phosphoethanolamine + H2O = acetaldehyde + NH4(+) + phosphate. Catalyzes the pyridoxal-phosphate-dependent breakdown of phosphoethanolamine, converting it to ammonia, inorganic phosphate and acetaldehyde. This Xenopus laevis (African clawed frog) protein is Ethanolamine-phosphate phospho-lyase (etnppl).